Here is a 683-residue protein sequence, read N- to C-terminus: Acyl-CoA synthetase short-chain family member 3, mitochondrial (683 aa).

Residues 1–29 constitute a mitochondrion transit peptide; it reads MKPSWLQCRKVTGAGTLGAPLPGSPSVRG. Residue 223–226 coordinates CoA; sequence EPGR. ATP is bound by residues 421–423 and 442–447; these read GER and DHWWQT. Lys-514 is subject to N6-succinyllysine. The residue at position 520 (Lys-520) is an N6-acetyllysine. Positions 535, 550, and 561 each coordinate ATP. Arg-620 contacts CoA.

The protein belongs to the ATP-dependent AMP-binding enzyme family. As to expression, expressed in a wide range of tissues, with the highest levels observed in the liver followed by kidney.

It is found in the mitochondrion matrix. It carries out the reaction acetate + ATP + CoA = acetyl-CoA + AMP + diphosphate. It catalyses the reaction propanoate + ATP + CoA = propanoyl-CoA + AMP + diphosphate. The catalysed reaction is butanoate + ATP + CoA = butanoyl-CoA + AMP + diphosphate. Catalyzes the synthesis of acetyl-CoA from short-chain fatty acids. Propionate is the preferred substrate but can also utilize acetate and butyrate with a much lower affinity. This chain is Acyl-CoA synthetase short-chain family member 3, mitochondrial (Acss3), found in Rattus norvegicus (Rat).